The primary structure comprises 186 residues: Peptidyl-tRNA hydrolase (186 aa).

Y14 lines the tRNA pocket. H19 acts as the Proton acceptor in catalysis. TRNA contacts are provided by F64, N66, and N112.

Belongs to the PTH family. Monomer.

It is found in the cytoplasm. It carries out the reaction an N-acyl-L-alpha-aminoacyl-tRNA + H2O = an N-acyl-L-amino acid + a tRNA + H(+). Hydrolyzes ribosome-free peptidyl-tRNAs (with 1 or more amino acids incorporated), which drop off the ribosome during protein synthesis, or as a result of ribosome stalling. Its function is as follows. Catalyzes the release of premature peptidyl moieties from peptidyl-tRNA molecules trapped in stalled 50S ribosomal subunits, and thus maintains levels of free tRNAs and 50S ribosomes. This chain is Peptidyl-tRNA hydrolase, found in Listeria monocytogenes serovar 1/2a (strain ATCC BAA-679 / EGD-e).